The following is an 831-amino-acid chain: Periplasmic nitrate reductase (831 aa).

Residues 1–38 (MSMARRDFIKQTAAAAAATVAGVPLTGYTQNIVTESEA) constitute a signal peptide (tat-type signal). Residues 41-97 (LKWSKAPCRFCGTGCGVNVAVKDNQVVATHGDFNAEVNKGLNCVKGYFLSKIMYGSD) form the 4Fe-4S Mo/W bis-MGD-type domain. [4Fe-4S] cluster-binding residues include Cys-48, Cys-51, Cys-55, and Cys-83. Mo-bis(molybdopterin guanine dinucleotide) contacts are provided by residues Lys-85, Gln-152, Asn-177, Cys-181, 214–221 (WGSNMAEM), 245–249 (STFEH), 264–266 (QSD), Met-375, Gln-379, Asn-485, 511–512 (SD), Lys-534, Asp-561, and 721–730 (TGRVLEHWHS). Residue Trp-797 coordinates substrate. The Mo-bis(molybdopterin guanine dinucleotide) site is built by Asn-805 and Lys-822.

It belongs to the prokaryotic molybdopterin-containing oxidoreductase family. NasA/NapA/NarB subfamily. In terms of assembly, component of the periplasmic nitrate reductase NapAB complex composed of NapA and NapB. Requires [4Fe-4S] cluster as cofactor. Mo-bis(molybdopterin guanine dinucleotide) serves as cofactor. Post-translationally, predicted to be exported by the Tat system. The position of the signal peptide cleavage has not been experimentally proven.

Its subcellular location is the periplasm. It catalyses the reaction 2 Fe(II)-[cytochrome] + nitrate + 2 H(+) = 2 Fe(III)-[cytochrome] + nitrite + H2O. Its function is as follows. Catalytic subunit of the periplasmic nitrate reductase complex NapAB. Receives electrons from NapB and catalyzes the reduction of nitrate to nitrite. This is Periplasmic nitrate reductase from Bordetella parapertussis (strain 12822 / ATCC BAA-587 / NCTC 13253).